The following is a 737-amino-acid chain: Probable serine/threonine-protein kinase DDB_G0269628 (737 aa).

The Protein kinase domain occupies 8-488; the sequence is YKLIKDLRSG…TLQKMDTSLL (481 aa). Residues 14 to 22 and Lys36 each bind ATP; that span reads LRSGGEGKA. Disordered stretches follow at residues 155 to 251 and 278 to 298; these read NTIQ…KKCS and TTAA…SSSN. Positions 156-167 are enriched in polar residues; that stretch reads TIQHSHSSSSLV. Residues 168-229 are compositionally biased toward low complexity; that stretch reads NGTTSPTNAT…PSSPSSPLSP (62 aa). The active-site Proton acceptor is the Asp349.

The protein belongs to the protein kinase superfamily. NEK Ser/Thr protein kinase family. NIMA subfamily.

The catalysed reaction is L-seryl-[protein] + ATP = O-phospho-L-seryl-[protein] + ADP + H(+). It catalyses the reaction L-threonyl-[protein] + ATP = O-phospho-L-threonyl-[protein] + ADP + H(+). The polypeptide is Probable serine/threonine-protein kinase DDB_G0269628 (Dictyostelium discoideum (Social amoeba)).